The sequence spans 295 residues: Secreted frizzled-related protein 2 (295 aa).

The N-terminal stretch at Met1 to Gly24 is a signal peptide. The FZ domain maps to Tyr35–Leu155. Cystine bridges form between Cys40/Cys103, Cys50/Cys96, Cys87/Cys125, Cys114/Cys152, Cys118/Cys142, Cys172/Cys245, Cys175/Cys247, and Cys190/Cys295. One can recognise an NTR domain in the interval Cys172–Cys295.

This sequence belongs to the secreted frizzled-related protein (sFRP) family. In terms of tissue distribution, highly expressed in the eye. Weaker expression in heart and lung.

It is found in the secreted. Soluble frizzled-related proteins (sFRPS) function as modulators of Wnt signaling through direct interaction with Wnts. They have a role in regulating cell growth and differentiation in specific cell types. SFRP2 may be important for eye retinal development and for myogenesis. This chain is Secreted frizzled-related protein 2, found in Mus musculus (Mouse).